The chain runs to 372 residues: NAD(P)H-quinone oxidoreductase subunit 1 (372 aa).

9 helical membrane-spanning segments follow: residues 27 to 47, 65 to 85, 97 to 117, 128 to 148, 166 to 186, 204 to 224, 266 to 286, 308 to 328, and 347 to 367; these read AIWM…GVLV, PEYI…KLVF, WLFT…YLIV, VGTG…GLLM, AAQS…IVMM, ILGW…IAAL, ILSA…PIPI, ALGI…AILL, and FLLP…LAFP.

This sequence belongs to the complex I subunit 1 family. In terms of assembly, NDH-1 is composed of at least 11 different subunits.

It localises to the cellular thylakoid membrane. It carries out the reaction a plastoquinone + NADH + (n+1) H(+)(in) = a plastoquinol + NAD(+) + n H(+)(out). The catalysed reaction is a plastoquinone + NADPH + (n+1) H(+)(in) = a plastoquinol + NADP(+) + n H(+)(out). Functionally, NDH-1 shuttles electrons from an unknown electron donor, via FMN and iron-sulfur (Fe-S) centers, to quinones in the respiratory and/or the photosynthetic chain. The immediate electron acceptor for the enzyme in this species is believed to be plastoquinone. Couples the redox reaction to proton translocation, and thus conserves the redox energy in a proton gradient. In Nostoc sp. (strain PCC 7120 / SAG 25.82 / UTEX 2576), this protein is NAD(P)H-quinone oxidoreductase subunit 1.